We begin with the raw amino-acid sequence, 439 residues long: Xylose isomerase (439 aa).

Residues histidine 101 and aspartate 104 contribute to the active site. Mg(2+) is bound by residues glutamate 232, glutamate 268, histidine 271, aspartate 296, aspartate 307, aspartate 309, and aspartate 339.

It belongs to the xylose isomerase family. In terms of assembly, homotetramer. Requires Mg(2+) as cofactor.

It localises to the cytoplasm. It catalyses the reaction alpha-D-xylose = alpha-D-xylulofuranose. The sequence is that of Xylose isomerase from Photobacterium profundum (strain SS9).